Reading from the N-terminus, the 294-residue chain is Tyrosine recombinase XerC (294 aa).

Positions 1–85 (MSRLVEDFFA…ACRGFYTWLV (85 aa)) constitute a Core-binding (CB) domain. In terms of domain architecture, Tyr recombinase spans 106–283 (KLPRILDADE…DFQYLSKVYD (178 aa)). Catalysis depends on residues R145, K169, H235, R238, and H261. The active-site O-(3'-phospho-DNA)-tyrosine intermediate is Y270.

The protein belongs to the 'phage' integrase family. XerC subfamily. Forms a cyclic heterotetrameric complex composed of two molecules of XerC and two molecules of XerD.

The protein localises to the cytoplasm. Its function is as follows. Site-specific tyrosine recombinase, which acts by catalyzing the cutting and rejoining of the recombining DNA molecules. The XerC-XerD complex is essential to convert dimers of the bacterial chromosome into monomers to permit their segregation at cell division. It also contributes to the segregational stability of plasmids. This Xylella fastidiosa (strain M23) protein is Tyrosine recombinase XerC.